Consider the following 149-residue polypeptide: 3-dehydroquinate dehydratase (149 aa).

Tyrosine 26 serves as the catalytic Proton acceptor. Positions 78, 84, and 91 each coordinate substrate. Histidine 104 functions as the Proton donor in the catalytic mechanism. Substrate is bound by residues 105–106 and arginine 115; that span reads LS.

Belongs to the type-II 3-dehydroquinase family. Homododecamer.

It catalyses the reaction 3-dehydroquinate = 3-dehydroshikimate + H2O. Its pathway is metabolic intermediate biosynthesis; chorismate biosynthesis; chorismate from D-erythrose 4-phosphate and phosphoenolpyruvate: step 3/7. Functionally, catalyzes a trans-dehydration via an enolate intermediate. The protein is 3-dehydroquinate dehydratase of Polynucleobacter asymbioticus (strain DSM 18221 / CIP 109841 / QLW-P1DMWA-1) (Polynucleobacter necessarius subsp. asymbioticus).